A 382-amino-acid polypeptide reads, in one-letter code: 4-hydroxybutyrate dehydrogenase (382 aa).

NAD(+) contacts are provided by residues aspartate 37, asparagine 67, 94–98, 138–142, and lysine 159; these read GSSID and TTSGT. Fe cation contacts are provided by aspartate 193, histidine 197, histidine 261, and histidine 280. NAD(+) is bound at residue histidine 280.

It belongs to the iron-containing alcohol dehydrogenase family. It depends on Fe cation as a cofactor.

The catalysed reaction is 4-hydroxybutanoate + NAD(+) = succinate semialdehyde + NADH + H(+). Shows competitive inhibition of GHBDH activity by the product succinic semialdehyde, and non-competitive inhibitions by the three other substrate-product combinations. The conversion of GHB to SSA is activated by two different saturating purified nudix hydrolases, B.methanolicus activator ACT and E.coli NudF. The nudix hydrolases do not activate the reverse reaction. In terms of biological role, involved in the degradation of 4-hydroxybutyrate. Catalyzes the interconversion of gamma-hydroxybutyrate (GHB) and succinic semialdehyde (SSA). The polypeptide is 4-hydroxybutyrate dehydrogenase (Cupriavidus necator (Alcaligenes eutrophus)).